Consider the following 352-residue polypeptide: MTITTLSRQNIQALTPYQSARKLGGNGTIWLNANEYPTSPEFQLSGKDLNRYPEPQPQRVVQAYANYAGVSTENVLVTRGGDEGIELIIHTFCEPKQDAILFCPPTYGMYAVSAETAGVLSKTVPLTDDFQLNLPEIKNHLNDVKVVFVCSPNNPTGNLLKQSDILDLLQITAGKAIVVVDEAYIEFCPEASVINLLKNYPHLAIIRTLSKAFALAGLRCGFVLANPELIDILSKVIAPYPIPVPSADLAEQALRPANIATVQALTQELLSNRQWLAKALLVLHQVEKVYESEANYLLIKCQNGQAVFKALWEQGIILRDQNKTLHLQNCIRITVGTRNECEKVVEAIKEVK.

Lys-211 bears the N6-(pyridoxal phosphate)lysine mark.

The protein belongs to the class-II pyridoxal-phosphate-dependent aminotransferase family. Histidinol-phosphate aminotransferase subfamily. In terms of assembly, homodimer. Pyridoxal 5'-phosphate serves as cofactor.

The enzyme catalyses L-histidinol phosphate + 2-oxoglutarate = 3-(imidazol-4-yl)-2-oxopropyl phosphate + L-glutamate. Its pathway is amino-acid biosynthesis; L-histidine biosynthesis; L-histidine from 5-phospho-alpha-D-ribose 1-diphosphate: step 7/9. The protein is Histidinol-phosphate aminotransferase of Haemophilus influenzae (strain PittGG).